A 312-amino-acid chain; its full sequence is MDKEWLEVCIYTSSEALEAISGILYNTGVKGVSIEDPKDIEFKRKHPGDWDYFDETLLKVKDTAIVKGYYKEDDKFNEYLDYIKKSVSNLDQFGIDKGEGLVEVHEVNEEDWENNWKKYYKPTKVSNKIVIKPIWENYDKKQEEIIVELDPGMAFGTGTHETTRMCINALEKYIKEDRTVFDIGCGSGILSIAAAKLGAKHVIGVDLDPVAVKSSKENIKYNNLDNIEILEGNLMEVVEGRANIVVANIIADVIIFLTEGVKAFIEKGGYFIASGIINSRKEDVIKKLEETGFIIEEVREEGEWACIVSKIN.

S-adenosyl-L-methionine contacts are provided by threonine 163, glycine 184, aspartate 206, and asparagine 248.

The protein belongs to the methyltransferase superfamily. PrmA family.

It localises to the cytoplasm. The enzyme catalyses L-lysyl-[protein] + 3 S-adenosyl-L-methionine = N(6),N(6),N(6)-trimethyl-L-lysyl-[protein] + 3 S-adenosyl-L-homocysteine + 3 H(+). Methylates ribosomal protein L11. The chain is Ribosomal protein L11 methyltransferase from Clostridium botulinum (strain Okra / Type B1).